Reading from the N-terminus, the 895-residue chain is Ras and Rab interactor 2 (895 aa).

The SH2 domain occupies 97-190 (WLQLSLSEEE…VLPFTLKLPY (94 aa)). The segment at 284-361 (LSGGLKRPST…KPTPIPPPRL (78 aa)) is disordered. Residues 306–315 (SPPPRPPPPA) show a composition bias toward pro residues. Residues 328–338 (TETQTSMPETV) are compositionally biased toward polar residues. A Phosphoserine modification is found at serine 366. Disordered regions lie at residues 373 to 442 (GAKT…SDSL) and 460 to 481 (SLED…KSKK). Over residues 430 to 441 (SDMSISTSSSDS) the composition is skewed to low complexity. Serine 501 bears the Phosphoserine mark. Residue threonine 509 is modified to Phosphothreonine. Residues 618–757 (DGSWKQLKEN…IKNFQEEQAA (140 aa)) enclose the VPS9 domain. The Ras-associating domain occupies 787–878 (FQNYLRVAFQ…FHFVYKRIKN (92 aa)).

This sequence belongs to the RIN (Ras interaction/interference) family. As to quaternary structure, homotetramer; probably composed of anti-parallel linkage of two parallel dimers. Interacts with Ras. Interacts with RAB5B, with a much higher affinity for GTP-bound activated RAB5B. Does not interact with other members of the Rab family. Widely expressed. Expressed in heart, kidney, lung placenta. Expressed at low level in skeletal muscle, spleen and peripheral blood.

It is found in the cytoplasm. Its function is as follows. Ras effector protein. May function as an upstream activator and/or downstream effector for RAB5B in endocytic pathway. May function as a guanine nucleotide exchange (GEF) of RAB5B, required for activating the RAB5 proteins by exchanging bound GDP for free GTP. This is Ras and Rab interactor 2 (RIN2) from Homo sapiens (Human).